Here is a 176-residue protein sequence, read N- to C-terminus: Adenine phosphoribosyltransferase (176 aa).

Belongs to the purine/pyrimidine phosphoribosyltransferase family. As to quaternary structure, homodimer.

It is found in the cytoplasm. The enzyme catalyses AMP + diphosphate = 5-phospho-alpha-D-ribose 1-diphosphate + adenine. The protein operates within purine metabolism; AMP biosynthesis via salvage pathway; AMP from adenine: step 1/1. Its function is as follows. Catalyzes a salvage reaction resulting in the formation of AMP, that is energically less costly than de novo synthesis. The chain is Adenine phosphoribosyltransferase from Thermobifida fusca (strain YX).